The chain runs to 231 residues: Casparian strip membrane protein 1 (231 aa).

Residues 1-69 (MSTSETATVI…FRQSDRGSRC (69 aa)) lie on the Cytoplasmic side of the membrane. The chain crosses the membrane as a helical span at residues 70–90 (LAFLDFLLRIAAFGPALAAAI). Residues 91-117 (ATGTSDETLSVFTEFFQFRARFDDFPA) are Extracellular-facing. Residues 118 to 138 (FLFLMVANAIAAGYLVLSLPF) form a helical membrane-spanning segment. At 139-152 (SAVVVLRPQATGLR) the chain is on the cytoplasmic side. A helical transmembrane segment spans residues 153–173 (LLLLVCDTIMIGLLTAAAAAA). Topologically, residues 174-207 (AAIVELAHNGNERANWVAICMQFHGFCQRTSGAV) are extracellular. Residues 208-228 (VASFLSVFLFLLLVVLAAFAI) traverse the membrane as a helical segment. Residues 229–231 (RKR) lie on the Cytoplasmic side of the membrane.

The protein belongs to the Casparian strip membrane proteins (CASP) family. Homodimer and heterodimers.

Its subcellular location is the cell membrane. Functionally, regulates membrane-cell wall junctions and localized cell wall deposition. Required for establishment of the Casparian strip membrane domain (CSD) and the subsequent formation of Casparian strips, a cell wall modification of the root endodermis that determines an apoplastic barrier between the intraorganismal apoplasm and the extraorganismal apoplasm and prevents lateral diffusion. The polypeptide is Casparian strip membrane protein 1 (Brachypodium distachyon (Purple false brome)).